The primary structure comprises 397 residues: Mitochondrial inner membrane magnesium transporter LPE10 (397 aa).

The transit peptide at 1 to 37 directs the protein to the mitochondrion; the sequence is MLLVNRAITLNLVKRCCWRSTMFMTPKRFLGTSEEES. Residues 316-336 form a helical membrane-spanning segment; that stretch reads LMLLGIRFSIGMLSLGGPIFI. Positions 340–343 match the YGMN motif; sequence YGMN. A helical membrane pass occupies residues 354-374; the sequence is GFIAASAIGMISLGALYFYSI.

The protein belongs to the CorA metal ion transporter (MIT) (TC 1.A.35) family. Forms homooligomers. Interacts with MRS2.

It localises to the mitochondrion inner membrane. Functionally, mitochondrial inner membrane magnesium transporter required for mitochondrial magnesium homeostasis. Modulates the conductance of the MRS2 channel. Involved in the splicing of mRNA group II introns in mitochondria by affecting mitochondrial magnesium concentrations, which are critical for group II intron splicing. The chain is Mitochondrial inner membrane magnesium transporter LPE10 (LPE10) from Candida glabrata (strain ATCC 2001 / BCRC 20586 / JCM 3761 / NBRC 0622 / NRRL Y-65 / CBS 138) (Yeast).